The chain runs to 83 residues: Exodeoxyribonuclease 7 small subunit (83 aa).

The protein belongs to the XseB family. As to quaternary structure, heterooligomer composed of large and small subunits.

It is found in the cytoplasm. It catalyses the reaction Exonucleolytic cleavage in either 5'- to 3'- or 3'- to 5'-direction to yield nucleoside 5'-phosphates.. Bidirectionally degrades single-stranded DNA into large acid-insoluble oligonucleotides, which are then degraded further into small acid-soluble oligonucleotides. The sequence is that of Exodeoxyribonuclease 7 small subunit from Allorhizobium ampelinum (strain ATCC BAA-846 / DSM 112012 / S4) (Agrobacterium vitis (strain S4)).